The following is a 378-amino-acid chain: Histidine decarboxylase (378 aa).

His120 contributes to the substrate binding site. Position 233 is an N6-(pyridoxal phosphate)lysine (Lys233). Ser323 is a catalytic residue.

It belongs to the group II decarboxylase family. As to quaternary structure, homotetramer. The cofactor is pyridoxal 5'-phosphate.

The catalysed reaction is L-histidine + H(+) = histamine + CO2. The sequence is that of Histidine decarboxylase (hdc) from Morganella morganii (Proteus morganii).